The following is a 1487-amino-acid chain: MIERGKYQSLTMVNWNGFFARTFDIDGLVTTLSGGNGAGKSTTMAAFITALIPDQTLLHFRNTTEAGSSQSSRDKGLYGKLQPGACYAALDVVNSRNQRLLFAVKLQQVAGRDKKVDIKPFVIQGLPSHVKPTDILVESVSATQARVRQINEVKDAIAEFEGVQFKAFSSIVDYHAQMFEFGVIPKKLRNSSDRSKFYRLIEASLYGGISSAITRSLRDYLLPQNGGVKKAFQDMESALRENRMTLEAIKTTQADRDLFKHLITESTNYVAADYMRHANDRRNKLEQTLSLRSELFGSRETLIEQNNLLNRVQEELELLIESESALEQDYQAASDHLQLVQNALRQQEKIERYQEDLEELSERLEEQMMVVEEAQERVMMVEEQATVAEEEVDSLKTQLADYQQALDVQQTRALQYQQAVQALEKAKQLLGDDCLTAESAQALVSELKNKESESTNALLSVKHKLDMSSAAAEQFETALKLVQSIVGQVERKDAAEQAKIVITKARESQQIAQNEQQWRAQHRDLERSLNQQRQARELVKEYQKQFHVELTDEITFEQERERHAMQIETLEMTQEELREQRSEQRRLEQDAAAEINKLEAIAPTWIAANDALEKLREQSGVDLEDRHAVMSHMQVVLEQEKELSLAKDKLAERRSQLESEIERLASPGGSNDPRLKGLADTLGGVLLSEIYDDITIDDAPYFSAMYGPARHAIVVSDLSGIEEKLVELDDCPEDLYIIEGDIDAFDDSSFDAEELEGAVCVRMNDRQMRYSRFPEIPLFGRAAREQRLELLRNEREEVVEKHAKAAFDSQKMQRLYQAFNQFVANHIQVAFEADPEQALANVREKRGQIARVLADLEAKEQQHRSQLQTSKQALSSLDKLAPNMALIEDDTLQARFDELEEKIAQLSEAKAFLNNHAKAVAELEKIASALDADPEQFDALEAEYKAADEQLQELKKQIFALSDLVERRHYFAYSDSVDLLNQSSELSEQLKAKLVQAEQMRTRSREELKQAQGQMNQYNQVLASLKSSHQAKLETVQEFKQELQEFGVNADEGAEERAIRRRDELHERLHTSRSRKSEYERTITSTELEMKGLAKRLKKVQKEYAELRTFVVAAKAGWCSVLRLARENDVERRLHKRELAYMSADELRSMSDKSLGALRLAVANNDDLRDALRLSEDNARPERKVLFYIAVYQHLRERIRQDIIRTDDPVEAIEEMEVELARLTEELTQRENRLAISSESVASIIKKTIQREQNRIRMLNQGLSNISFGQVKGVRLNVKIRESHEVLLHGLSSQQEQHKDLFESPRFTFSEAMAKLFQRVNPHIDMGQRSPQVLGEELLDYRNYLELSVEVNRGSDGWLQAESGALSTGEAIGTGQSILLMVVQSWEEESRRLRSKDIIPCRLLFLDEAARLDAKSISTLFELCDRLDMQLLIAAPENISPEKGTTYKLVRKVFKDHEHVHVVGLRGFGQTDKPKSEVQEMIEEFES.

Gly34–Ser41 is a binding site for ATP. 6 coiled-coil regions span residues Gly297–Leu458, Arg506–Ile601, Leu637–Ser666, Arg781–Ala806, Glu836–Thr1109, and Val1210–Ile1266. The tract at residues Pro667–Arg784 is flexible hinge.

Belongs to the SMC family. MukB subfamily. Homodimerization via its hinge domain. Binds to DNA via its C-terminal region. Interacts, and probably forms a ternary complex, with MukE and MukF via its C-terminal region. The complex formation is stimulated by calcium or magnesium. Interacts with tubulin-related protein FtsZ.

It localises to the cytoplasm. The protein localises to the nucleoid. In terms of biological role, plays a central role in chromosome condensation, segregation and cell cycle progression. Functions as a homodimer, which is essential for chromosome partition. Involved in negative DNA supercoiling in vivo, and by this means organize and compact chromosomes. May achieve or facilitate chromosome segregation by condensation DNA from both sides of a centrally located replisome during cell division. The protein is Chromosome partition protein MukB of Vibrio parahaemolyticus serotype O3:K6 (strain RIMD 2210633).